Reading from the N-terminus, the 75-residue chain is Large ribosomal subunit protein bL31 (75 aa).

The protein belongs to the bacterial ribosomal protein bL31 family. Type A subfamily. As to quaternary structure, part of the 50S ribosomal subunit.

Binds the 23S rRNA. This chain is Large ribosomal subunit protein bL31, found in Chlorobium phaeobacteroides (strain BS1).